The primary structure comprises 115 residues: Hydrogenase maturation factor HypA (115 aa).

Residue His-2 participates in Ni(2+) binding. Residues Cys-73, Cys-76, Cys-89, and Cys-92 each coordinate Zn(2+).

It belongs to the HypA/HybF family.

Functionally, involved in the maturation of [NiFe] hydrogenases. Required for nickel insertion into the metal center of the hydrogenase. The protein is Hydrogenase maturation factor HypA of Polaromonas naphthalenivorans (strain CJ2).